The primary structure comprises 144 residues: Large ribosomal subunit protein uL11 (144 aa).

The protein belongs to the universal ribosomal protein uL11 family. Part of the ribosomal stalk of the 50S ribosomal subunit. Interacts with L10 and the large rRNA to form the base of the stalk. L10 forms an elongated spine to which L12 dimers bind in a sequential fashion forming a multimeric L10(L12)X complex. One or more lysine residues are methylated.

In terms of biological role, forms part of the ribosomal stalk which helps the ribosome interact with GTP-bound translation factors. This Streptomyces coelicolor (strain ATCC BAA-471 / A3(2) / M145) protein is Large ribosomal subunit protein uL11.